Consider the following 384-residue polypeptide: Chaperone protein DnaJ (384 aa).

The 66-residue stretch at Asp-5–Gly-70 folds into the J domain. A CR-type zinc finger spans residues Gly-138–Thr-216. Residues Cys-151, Cys-154, Cys-168, Cys-171, Cys-190, Cys-193, Cys-204, and Cys-207 each coordinate Zn(2+). CXXCXGXG motif repeat units follow at residues Cys-151–Gly-158, Cys-168–Gly-175, Cys-190–Gly-197, and Cys-204–Gly-211.

Belongs to the DnaJ family. Homodimer. Zn(2+) serves as cofactor.

It is found in the cytoplasm. Its function is as follows. Participates actively in the response to hyperosmotic and heat shock by preventing the aggregation of stress-denatured proteins and by disaggregating proteins, also in an autonomous, DnaK-independent fashion. Unfolded proteins bind initially to DnaJ; upon interaction with the DnaJ-bound protein, DnaK hydrolyzes its bound ATP, resulting in the formation of a stable complex. GrpE releases ADP from DnaK; ATP binding to DnaK triggers the release of the substrate protein, thus completing the reaction cycle. Several rounds of ATP-dependent interactions between DnaJ, DnaK and GrpE are required for fully efficient folding. Also involved, together with DnaK and GrpE, in the DNA replication of plasmids through activation of initiation proteins. The sequence is that of Chaperone protein DnaJ from Idiomarina loihiensis (strain ATCC BAA-735 / DSM 15497 / L2-TR).